The sequence spans 126 residues: Nitrogenase-stabilizing/protective protein NifW (126 aa).

Residues 104–126 (VPMSEITVERPATTQTDEKGQQR) are disordered.

Belongs to the NifW family. Homotrimer; associates with NifD.

Its function is as follows. May protect the nitrogenase Fe-Mo protein from oxidative damage. The polypeptide is Nitrogenase-stabilizing/protective protein NifW (Parafrankia sp. (strain EAN1pec)).